The chain runs to 757 residues: Mitofusin-2 (757 aa).

Over 1–604 (MSLLFSRCNS…TQEELMVSMV (604 aa)) the chain is Cytoplasmic. Residues 30–94 (KHFVTAKKKI…VRGISEVLAR (65 aa)) are part of a helix bundle domain, formed by helices from N-terminal and C-terminal regions. Residues 93–342 (ARRHMKVAFF…VRMFEFQNFE (250 aa)) enclose the Dynamin-type G domain. Residues 103–110 (GRTSNGKS) form a G1 motif region. 106–111 (SNGKST) contacts GTP. Threonine 111 is subject to Phosphothreonine; by PINK1. The segment at 129–130 (TT) is G2 motif. Residues 199–202 (DSPG) are G3 motif. Residue 258-261 (NRWD) coordinates GTP. Residues 258–261 (NRWD) are G4 motif. Glutamate 288 is a region of interest (G5 motif). GTP contacts are provided by serine 305 and lysine 307. The tract at residues 359–385 (EQHTVRAKQIAEAVRLIMDSLHIAAQE) is part of a helix bundle domain, formed by helices from N-terminal and C-terminal regions. The stretch at 406 to 435 (KQLELLAQDYKLRIKQMTEEVERQVSTAMA) forms a coiled coil. Serine 442 carries the post-translational modification Phosphoserine; by PINK1. The helical transmembrane segment at 605–625 (TGLASLTSRTSMGILVVGGVV) threads the bilayer. Position 626 (tryptophan 626) is a topological domain, mitochondrial intermembrane. The helical transmembrane segment at 627–647 (KAVGWRLIALSFGLYGLLYVY) threads the bilayer. Residues 648–757 (ERLTWTTRAK…FIHQYLQPSR (110 aa)) are Cytoplasmic-facing. A coiled-coil region spans residues 696–738 (FAHLCQQVDITRDNLEQEIAAMNKKVEALDSLQSKAKLLRNKA). The segment at 722–753 (EALDSLQSKAKLLRNKAGWLDSELNMFIHQYL) is part of a helix bundle domain, formed by helices from N-terminal and C-terminal regions.

This sequence belongs to the TRAFAC class dynamin-like GTPase superfamily. Dynamin/Fzo/YdjA family. Mitofusin subfamily. In terms of assembly, forms homomultimers and heteromultimers with MFN1. Oligomerization is essential for mitochondrion fusion. Interacts with VAT1. Interacts with STOML2; may form heterooligomers. Interacts (phosphorylated) with PRKN. Interacts with EIF2AK3. Interacts with THG1L; THG1L probably functions as a guanyl-nucleotide exchange factor/GEF, activating MFN2. In terms of processing, phosphorylated by PINK1. Post-translationally, ubiquitinated by non-degradative ubiquitin by PRKN, promoting mitochondrial fusion; deubiquitination by USP30 inhibits mitochondrial fusion. Ubiquitinated by HUWE1 when dietary stearate (C18:0) levels are low; ubiquitination inhibits mitochondrial fusion. Ubiquitous. In brain, it is more expressed than MFN1, while it is expressed at a weaker level than MFN1 in heart and testis. Expressed at high level in elongating spermatids of seminiferous tubules. Expression is markedly down-regulated in highly proliferative vascular smooth muscle cells (VSMCs) from the genetic hypertensive animal model SHR, as well as in balloon-injured Wistar Kyoto arteries.

The protein localises to the mitochondrion outer membrane. The enzyme catalyses GTP + H2O = GDP + phosphate + H(+). Functionally, mitochondrial outer membrane GTPase that mediates mitochondrial clustering and fusion. Mitochondria are highly dynamic organelles, and their morphology is determined by the equilibrium between mitochondrial fusion and fission events. Overexpression induces the formation of mitochondrial networks. Membrane clustering requires GTPase activity and may involve a major rearrangement of the coiled coil domains. Plays a central role in mitochondrial metabolism and may be associated with obesity and/or apoptosis processes. Plays an important role in the regulation of vascular smooth muscle cell proliferation. Involved in the clearance of damaged mitochondria via selective autophagy (mitophagy). Is required for PRKN recruitment to dysfunctional mitochondria. Involved in the control of unfolded protein response (UPR) upon ER stress including activation of apoptosis and autophagy during ER stress. Acts as an upstream regulator of EIF2AK3 and suppresses EIF2AK3 activation under basal conditions. This chain is Mitofusin-2 (Mfn2), found in Rattus norvegicus (Rat).